The chain runs to 184 residues: MSRIGKRPISIPGGVDVNIEGNVVTVKGPKGTLTKEMHSLINIAVEEQQIVVTRPDDQPLSRSLHGLTRTLVANMVEGVTKGFSKSLDMVGVGYRAAKQGNKLVLSVGKSHPVELIPFEGIEVEVPAQNKIIVKGMDKELVGDFAAEIRKERPPEPYKGKGIKYENEVVRRKAGKTGAKKGGKK.

It belongs to the universal ribosomal protein uL6 family. As to quaternary structure, part of the 50S ribosomal subunit.

This protein binds to the 23S rRNA, and is important in its secondary structure. It is located near the subunit interface in the base of the L7/L12 stalk, and near the tRNA binding site of the peptidyltransferase center. The polypeptide is Large ribosomal subunit protein uL6 (Desulfitobacterium hafniense (strain Y51)).